The primary structure comprises 227 residues: Cytochrome c oxidase subunit 2 (227 aa).

At M1–S14 the chain is on the mitochondrial intermembrane side. A helical transmembrane segment spans residues P15 to M45. Residues L46–Q59 lie on the Mitochondrial matrix side of the membrane. Residues S60–M87 form a helical membrane-spanning segment. The Mitochondrial intermembrane segment spans residues D88–I227. Cu cation-binding residues include H161, C196, E198, C200, H204, and M207. Position 198 (E198) interacts with Mg(2+).

This sequence belongs to the cytochrome c oxidase subunit 2 family. As to quaternary structure, component of the cytochrome c oxidase (complex IV, CIV), a multisubunit enzyme composed of 14 subunits. The complex is composed of a catalytic core of 3 subunits MT-CO1, MT-CO2 and MT-CO3, encoded in the mitochondrial DNA, and 11 supernumerary subunits COX4I, COX5A, COX5B, COX6A, COX6B, COX6C, COX7A, COX7B, COX7C, COX8 and NDUFA4, which are encoded in the nuclear genome. The complex exists as a monomer or a dimer and forms supercomplexes (SCs) in the inner mitochondrial membrane with NADH-ubiquinone oxidoreductase (complex I, CI) and ubiquinol-cytochrome c oxidoreductase (cytochrome b-c1 complex, complex III, CIII), resulting in different assemblies (supercomplex SCI(1)III(2)IV(1) and megacomplex MCI(2)III(2)IV(2)). Found in a complex with TMEM177, COA6, COX18, COX20, SCO1 and SCO2. Interacts with TMEM177 in a COX20-dependent manner. Interacts with COX20. Interacts with COX16. Requires Cu cation as cofactor.

Its subcellular location is the mitochondrion inner membrane. The enzyme catalyses 4 Fe(II)-[cytochrome c] + O2 + 8 H(+)(in) = 4 Fe(III)-[cytochrome c] + 2 H2O + 4 H(+)(out). Functionally, component of the cytochrome c oxidase, the last enzyme in the mitochondrial electron transport chain which drives oxidative phosphorylation. The respiratory chain contains 3 multisubunit complexes succinate dehydrogenase (complex II, CII), ubiquinol-cytochrome c oxidoreductase (cytochrome b-c1 complex, complex III, CIII) and cytochrome c oxidase (complex IV, CIV), that cooperate to transfer electrons derived from NADH and succinate to molecular oxygen, creating an electrochemical gradient over the inner membrane that drives transmembrane transport and the ATP synthase. Cytochrome c oxidase is the component of the respiratory chain that catalyzes the reduction of oxygen to water. Electrons originating from reduced cytochrome c in the intermembrane space (IMS) are transferred via the dinuclear copper A center (CU(A)) of subunit 2 and heme A of subunit 1 to the active site in subunit 1, a binuclear center (BNC) formed by heme A3 and copper B (CU(B)). The BNC reduces molecular oxygen to 2 water molecules using 4 electrons from cytochrome c in the IMS and 4 protons from the mitochondrial matrix. This chain is Cytochrome c oxidase subunit 2 (MT-CO2), found in Acomys wilsoni (Wilson's spiny mouse).